Here is a 237-residue protein sequence, read N- to C-terminus: Immunoglobulin superfamily member 6 (237 aa).

Positions 1 to 27 are cleaved as a signal peptide; the sequence is MGPVSARRSRLRPEISLILFQVGMVGA. Topologically, residues 28–152 are extracellular; it reads CTVYVLQPGY…ERLFSKEVRS (125 aa). An Ig-like C2-type domain is found at 30 to 134; it reads VYVLQPGYLE…ELSPSAKHVG (105 aa). A disulfide bridge connects residues C51 and C118. The chain crosses the membrane as a helical span at residues 153 to 173; the sequence is FLIVLLALLSVYITGVCVTFI. At 174-237 the chain is on the cytoplasmic side; it reads VLFKSKSNGP…RKALPNPGRA (64 aa). Basic and acidic residues predominate over residues 215–229; that stretch reads TSHLPEQEGTDENRK. The segment at 215-237 is disordered; sequence TSHLPEQEGTDENRKALPNPGRA.

In terms of tissue distribution, ubiquitous with higher expression in immune tissue.

Its subcellular location is the membrane. This is Immunoglobulin superfamily member 6 (Igsf6) from Mus musculus (Mouse).